The following is a 453-amino-acid chain: tRNA (guanine-N(7)-)-methyltransferase non-catalytic subunit TRM82 (453 aa).

The segment at 69 to 99 (ENEEKGIKKSKTNEGNTIEKKHDAKIPVPGP) is disordered. WD repeat units follow at residues 103-143 (PIYS…NDNC) and 244-286 (GHKE…DEFD).

Belongs to the WD repeat TRM82 family. As to quaternary structure, forms a heterodimer with the catalytic subunit TRM8.

The protein localises to the nucleus. The protein operates within tRNA modification; N(7)-methylguanine-tRNA biosynthesis. Functionally, required for the formation of N(7)-methylguanine at position 46 (m7G46) in tRNA. In the complex, it is required to stabilize and induce conformational changes of the catalytic subunit. This chain is tRNA (guanine-N(7)-)-methyltransferase non-catalytic subunit TRM82, found in Vanderwaltozyma polyspora (strain ATCC 22028 / DSM 70294 / BCRC 21397 / CBS 2163 / NBRC 10782 / NRRL Y-8283 / UCD 57-17) (Kluyveromyces polysporus).